A 953-amino-acid polypeptide reads, in one-letter code: MRPLPTGIYTPLPCFFHENEDIDIEALQSHVKFIASAGTIPVVSGSMGEAIHLNREEKKTIIRSARVALDEVNLHDVPIVAGAGGASTRESIELCKDAAEAGADYVMVIPPGYYAGALLADTSSIKKFFVDIAEASPLPVIIYNFPAVSGGIDMDSDLIVQIIQSSANICGVKLTCANVGKLTRIMAQVSRPEFQAAFPRSSATPFRAIDGFIDFLLPSISVGSAGAISGLPNIAPKSCVKLWNLCQDSGSSKQATELQNLIALADGVALKIGIAGMKKLLHRHFGRKVACDMPNGPPCLRCTNKYQECTFEEGPGPRKRARLCEQTETFGTCEQPDGWQDLLTETRPNIGQSEDLEAVSPQGSLLGANQELESTSPRTSHSSLSQDDTASLHSRSSLSSSPGRFPPSQKLVATSDSPSQINSLEFIPDAFSFYIGPTGVTDIHILSHQKYNDQNVSLPKVNGLKYRIMDNPGQKEMATVDFSPPTVFGITDHSLLEKAEPKLDPQLTENGWPRLWAMMDPTAAWHLIKLYSRYIDPYFPILSSHQIPSSSAELNKMPLALLTAICATALPFVMYDDSLYTMLLNPPSSEELYRLCWLCISQELHAPSLATLQACLLLQQRLPTNMYLSDTAFAWTLMATSLAVAQTIGLHRDTGSWTSIPAWEKRLRRRLWWGLYAMEKWVALARGMPSHLGDDDYDVSMLKADDIQDTLSDSPDTQSHIYHLSNLSTILSDIQRSFYSVKAIGKTSNDLQYSLDLARPMRVRLKDWRDNLPSNLRPVSNAVISGEDLDGNGSLYLSYIVTHVALLRALLRPLDRWPAIIKVNKEEPEATYEGAKAVVTGALLCVKEFVEFVERLTGAQWNAFWHSWSRPNFAIAGSFMVHLLQIVTPPNQTDSQSMPELLKYSFEKEHTELQDWIRRWRWATRISANGAAGVKGLTNLGFIKVETLIGNGT.

Residues 371–418 form a disordered region; it reads ELESTSPRTSHSSLSQDDTASLHSRSSLSSSPGRFPPSQKLVATSDSP. Residues 374-408 show a composition bias toward low complexity; that stretch reads STSPRTSHSSLSQDDTASLHSRSSLSSSPGRFPPS.

The protein localises to the nucleus. Functionally, transcriptional regulator; part of the gene cluster that mediates the biosynthesis of communesins, a prominent class of indole alkaloids with great potential as pharmaceuticals. In Penicillium expansum (Blue mold rot fungus), this protein is Communesin biosynthesis cluster-specific transcription factor cnsN.